A 347-amino-acid chain; its full sequence is Holliday junction branch migration complex subunit RuvB (347 aa).

The interval 13 to 195 (NEDAVTSGEV…FGIVEHMQYY (183 aa)) is large ATPase domain (RuvB-L). ATP contacts are provided by residues leucine 34, arginine 35, glycine 76, lysine 79, threonine 80, threonine 81, 142–144 (EDY), arginine 185, tyrosine 195, and arginine 232. Threonine 80 is a binding site for Mg(2+). Residues 196–266 (TIDELEKIVQ…TTEGALKQLQ (71 aa)) are small ATPAse domain (RuvB-S). Positions 269-347 (DEGLDQTDRR…QLGLPVPGDK (79 aa)) are head domain (RuvB-H). Residue arginine 329 coordinates DNA.

This sequence belongs to the RuvB family. As to quaternary structure, homohexamer. Forms an RuvA(8)-RuvB(12)-Holliday junction (HJ) complex. HJ DNA is sandwiched between 2 RuvA tetramers; dsDNA enters through RuvA and exits via RuvB. An RuvB hexamer assembles on each DNA strand where it exits the tetramer. Each RuvB hexamer is contacted by two RuvA subunits (via domain III) on 2 adjacent RuvB subunits; this complex drives branch migration. In the full resolvosome a probable DNA-RuvA(4)-RuvB(12)-RuvC(2) complex forms which resolves the HJ.

Its subcellular location is the cytoplasm. The catalysed reaction is ATP + H2O = ADP + phosphate + H(+). Functionally, the RuvA-RuvB-RuvC complex processes Holliday junction (HJ) DNA during genetic recombination and DNA repair, while the RuvA-RuvB complex plays an important role in the rescue of blocked DNA replication forks via replication fork reversal (RFR). RuvA specifically binds to HJ cruciform DNA, conferring on it an open structure. The RuvB hexamer acts as an ATP-dependent pump, pulling dsDNA into and through the RuvAB complex. RuvB forms 2 homohexamers on either side of HJ DNA bound by 1 or 2 RuvA tetramers; 4 subunits per hexamer contact DNA at a time. Coordinated motions by a converter formed by DNA-disengaged RuvB subunits stimulates ATP hydrolysis and nucleotide exchange. Immobilization of the converter enables RuvB to convert the ATP-contained energy into a lever motion, pulling 2 nucleotides of DNA out of the RuvA tetramer per ATP hydrolyzed, thus driving DNA branch migration. The RuvB motors rotate together with the DNA substrate, which together with the progressing nucleotide cycle form the mechanistic basis for DNA recombination by continuous HJ branch migration. Branch migration allows RuvC to scan DNA until it finds its consensus sequence, where it cleaves and resolves cruciform DNA. This is Holliday junction branch migration complex subunit RuvB from Lactobacillus helveticus (strain DPC 4571).